The primary structure comprises 1859 residues: MNLNFSLACETQASSFYGGFRPFIKYPSLQHSPGSVKEGDNKGANRSLKKATPWLRVSLERPYKYRTTLNARPVFFNRCFDKGRFKSLILWCILNFGEQKTVELVEQLKDIGYHQATLAGVSLGIDDLKIPNSKAQLVAEAQLENQLILQEDLRGNVTSIEKFQRLIDTWHLTSETLKDNVIKAFRNTDILNPVYMMAFSGARGNVSQVRQLVGMRGLMADPQGQIINFPIQSNFREGLTLTEYVISCYGARKGVVDTALRTATSGYLTRRLVDVAQHVIVYQFDCQTTRGILLNTIKVGNTTSISLQKRLVGRVSAEDIYNSKTNTKEVSRNQEITPILAEQISQNHNQVLVRSALTCQAKHGVCQLCYGWSLAQGSLVSLGEAVGVVAAQSIGEPGTQLTMRTFHTGGVFSGDVMEQIQAPHNGIVEFQTALQGTLIRTSHGKIAFLTYTKGELTLKNTTKAQRGLNHHLSSSLTQTVVGETKIIFPSYTILYVRNGEAVKHKQFIAEYSSLVGENQSIKSSQKVNAEMTGEVFFENVFLRVESSEESEKTYRSFKFSDIWILSCVTNTLKFKSNFSLTKPGDRINTATVINQVLLKKTDEGVATQQQSKKALSLPLNTSMEVLGEANKVDFSSKKTCKGLLQTDYKNLGYFYSFQNKLTKKAKSFDHSTSHLSRKGTVSLVQKNNTKSVNELFFKYGKPNLSGGSDLFKGSTSKGSPEGATGSLPVSSLNKDPFVTWYSSLFKAKYSGFYTPSTAPFTDTRMSQPAFRLAKKTANKKPPTLPCKYWGKGSFLLRNLSEVELFSNRNPGVFKRLESMTGLLSQQVYQDCYANQKILLTPFSPNTLQHSSPNTPKGVLRDGKSVVGRSNPPQHFHGSVGGGCPSKQVSAGPKKGLRAKHSEACFAIDFGETKTKTITKGRYVSQLNCKKEKRLLAKTSRMFSTLKVEFWLFENLTLSLVTHQHFPQYSYRSVEGPPTGMLGLWLLNNSFVLKQLVTNLETVASVGLPFGVVLNQNTNQNLNGSELLSQSLLNSSKKVEGPGRSASSGVLRAGSVGVDWLYFSSANTYLGKVSSGFENNKTQLIKSGQGVKQNFDQSLISQETILLASALKQLSNKQKTWPSLAFYNTLTFKNNNELGQSQLFNTGELDNNASNKSSVFSTGKSLLCHNPVLSKICNTTTFITPFNIKDRGVAPTELQLKQENKCIATQSSFLCNPTNLTPKVFLTTNYPGKVACSCVGGDVGKDTFVKVNLSQFDFIESNQSRFVPTLSFTSTLNRVNAVQQISLTKPHIYQKFFLSAQRGSYHLKTKKTLQGSPGLSYSGISNYSVSHHRSKKAESHTLPLRLNYAVKKVSRVDEERIPLRKKPKTDITKVFSIPELDWNVKLRLPSINSPETQGKNKAGVSYLVKLDLGVQRPQTAVSGRVDIFQRGLGDSEKALGFKGVAPHSSEKLNVPVFNQTNIFGLADSDASVKAGAVFETSKYTGEILKSIESKQQRLFNTPLGVVEKGLQLQNGQTHLSQLETKTIPSSLSPDSTQISPTQRVLTSDDQKTFNVLGKKPLVKVGDFVRYGDFLTCDKKISVSEPGLVIKITSSKITIRIAKPVLVSSGGVFHVQHGDFIEENAPLVTLTYTRLKTGDIVQGIPKIEELFEARISGTLHNQLAIIFENYKQKFSSAYAARKSLERIQQIIVENVLNVYQSQGVTIADKHVEIIVRQMTSKVRILESGRSGLLRGELVTLESVENANKSIHGQKAEYAPVLVGITKAALDIDKSFISAASFQETTRILSRAAIERKTDFLRGLKENVILGQLIPAGTGFSVSFSPEDPNHSKKVVKLVNQYLFSSDNLTSSTFSHMSRSSH.

Zn(2+) is bound by residues Cys-286, Cys-359, Cys-366, and Cys-369.

This sequence belongs to the RNA polymerase beta' chain family. RpoC2 subfamily. As to quaternary structure, in plastids the minimal PEP RNA polymerase catalytic core is composed of four subunits: alpha, beta, beta', and beta''. When a (nuclear-encoded) sigma factor is associated with the core the holoenzyme is formed, which can initiate transcription. It depends on Zn(2+) as a cofactor.

The protein localises to the plastid. It localises to the chloroplast. It catalyses the reaction RNA(n) + a ribonucleoside 5'-triphosphate = RNA(n+1) + diphosphate. Functionally, DNA-dependent RNA polymerase catalyzes the transcription of DNA into RNA using the four ribonucleoside triphosphates as substrates. The protein is DNA-directed RNA polymerase subunit beta'' of Oltmannsiellopsis viridis (Marine flagellate).